We begin with the raw amino-acid sequence, 53 residues long: Antitoxin RelB3 (53 aa).

In terms of assembly, forms heterodimers with RelE and possibly a heterotetramer RelE3-RelB3(2)-RelE3 from 2 heterodimers. The heterotetramer is probably not very stable in solution.

Its function is as follows. Antitoxin component of a type II toxin-antitoxin (TA) system. Probably neutralizes the toxic activity of cognate toxin RelE. The polypeptide is Antitoxin RelB3 (relB3) (Methanocaldococcus jannaschii (strain ATCC 43067 / DSM 2661 / JAL-1 / JCM 10045 / NBRC 100440) (Methanococcus jannaschii)).